A 98-amino-acid chain; its full sequence is NADH-ubiquinone oxidoreductase chain 4L (98 aa).

The next 3 helical transmembrane spans lie at methionine 1–threonine 21, valine 27–isoleucine 47, and isoleucine 61–isoleucine 81.

It belongs to the complex I subunit 4L family. Core subunit of respiratory chain NADH dehydrogenase (Complex I) which is composed of 45 different subunits.

It is found in the mitochondrion inner membrane. It carries out the reaction a ubiquinone + NADH + 5 H(+)(in) = a ubiquinol + NAD(+) + 4 H(+)(out). Its function is as follows. Core subunit of the mitochondrial membrane respiratory chain NADH dehydrogenase (Complex I) which catalyzes electron transfer from NADH through the respiratory chain, using ubiquinone as an electron acceptor. Part of the enzyme membrane arm which is embedded in the lipid bilayer and involved in proton translocation. In Macaca fascicularis (Crab-eating macaque), this protein is NADH-ubiquinone oxidoreductase chain 4L (MT-ND4L).